We begin with the raw amino-acid sequence, 238 residues long: ATP synthase subunit a (238 aa).

The next 5 helical transmembrane spans lie at 15 to 35 (IFNL…FVFI), 76 to 96 (YSLF…LGLM), 111 to 131 (PTAN…LTHI), 167 to 187 (LALR…LLLL), and 208 to 230 (AFSV…VYLG).

Belongs to the ATPase A chain family. As to quaternary structure, F-type ATPases have 2 components, CF(1) - the catalytic core - and CF(0) - the membrane proton channel. CF(1) has five subunits: alpha(3), beta(3), gamma(1), delta(1), epsilon(1). CF(0) has three main subunits: a(1), b(2) and c(9-12). The alpha and beta chains form an alternating ring which encloses part of the gamma chain. CF(1) is attached to CF(0) by a central stalk formed by the gamma and epsilon chains, while a peripheral stalk is formed by the delta and b chains.

It is found in the cell membrane. Functionally, key component of the proton channel; it plays a direct role in the translocation of protons across the membrane. The polypeptide is ATP synthase subunit a (Streptococcus pneumoniae serotype 19F (strain G54)).